A 478-amino-acid polypeptide reads, in one-letter code: Cytochrome P450 monooxygenase ATR3 (478 aa).

A helical transmembrane segment spans residues 20–42; that stretch reads AVAFVTASALYYVLPAAISHIQL. Asn159 and Asn268 each carry an N-linked (GlcNAc...) asparagine glycan.

This sequence belongs to the cytochrome P450 family. Heme is required as a cofactor.

Its subcellular location is the membrane. Its pathway is mycotoxin biosynthesis. In terms of biological role, cytochrome P450 monooxygenase; part of the core atranone cluster (CAC) which products are predicted to catalyze most or all steps of mycotoxin atranone synthesis, starting from geranylgeranyl pyrophosphate (GGPP). The initial cyclization of GGPP to dolabellane is probably performed by the terpene cyclase ATR13. The Baeyer-Villiger oxidation near the end of the atranone synthesis, which converts atranones D and E to atranones F and G is predicted to be catalyzed by the monooxygenase ATR8. Of the CAC's other predicted gene products, the reducing PKS ATR6 might synthesize a polyketide chain. This polyketide is probably transferred onto the atranone backbone by the polyketide transferase ATR5. Other predicted CAC products include 4 oxygenases (ATR2, ATR3, ATR4, and ATR14), 3 short-chain reductases (ATR7, ATR9, and ATR10), and a methyltransferase (ATR12). These may all be involved in the various steps of atranone biosynthesis, although their specific roles must await experimental determination. This chain is Cytochrome P450 monooxygenase ATR3, found in Stachybotrys chlorohalonatus (strain IBT 40285).